Consider the following 216-residue polypeptide: NADH-quinone oxidoreductase subunit C (216 aa).

The protein belongs to the complex I 30 kDa subunit family. As to quaternary structure, NDH-1 is composed of 14 different subunits. Subunits NuoB, C, D, E, F, and G constitute the peripheral sector of the complex.

It is found in the cell inner membrane. It catalyses the reaction a quinone + NADH + 5 H(+)(in) = a quinol + NAD(+) + 4 H(+)(out). Its function is as follows. NDH-1 shuttles electrons from NADH, via FMN and iron-sulfur (Fe-S) centers, to quinones in the respiratory chain. The immediate electron acceptor for the enzyme in this species is believed to be ubiquinone. Couples the redox reaction to proton translocation (for every two electrons transferred, four hydrogen ions are translocated across the cytoplasmic membrane), and thus conserves the redox energy in a proton gradient. The sequence is that of NADH-quinone oxidoreductase subunit C from Francisella tularensis subsp. tularensis (strain FSC 198).